We begin with the raw amino-acid sequence, 391 residues long: Succinate--CoA ligase [ADP-forming] subunit beta (391 aa).

Positions 9–248 (KDILRKFGVS…TGEEDPFEVE (240 aa)) constitute an ATP-grasp domain. Residues Lys50, 57 to 59 (GRG), Glu103, Met106, and Glu111 each bind ATP. Residues Asn203 and Asp217 each contribute to the Mg(2+) site. Residues Asn268 and 325–327 (GIV) each bind substrate.

The protein belongs to the succinate/malate CoA ligase beta subunit family. As to quaternary structure, heterotetramer of two alpha and two beta subunits. Mg(2+) is required as a cofactor.

It catalyses the reaction succinate + ATP + CoA = succinyl-CoA + ADP + phosphate. The enzyme catalyses GTP + succinate + CoA = succinyl-CoA + GDP + phosphate. It participates in carbohydrate metabolism; tricarboxylic acid cycle; succinate from succinyl-CoA (ligase route): step 1/1. Succinyl-CoA synthetase functions in the citric acid cycle (TCA), coupling the hydrolysis of succinyl-CoA to the synthesis of either ATP or GTP and thus represents the only step of substrate-level phosphorylation in the TCA. The beta subunit provides nucleotide specificity of the enzyme and binds the substrate succinate, while the binding sites for coenzyme A and phosphate are found in the alpha subunit. In Chlorobium phaeobacteroides (strain BS1), this protein is Succinate--CoA ligase [ADP-forming] subunit beta.